A 100-amino-acid chain; its full sequence is uncharacterized protein (100 aa).

Basic and acidic residues predominate over residues 68–91 (EQYASGAGEKRKEQSSGNSRRKDP). A disordered region spans residues 68 to 100 (EQYASGAGEKRKEQSSGNSRRKDPSLYNWSDVK).

Belongs to the chlamydial CPn_0121/CT_031/TC_0300 family.

This is an uncharacterized protein from Chlamydia muridarum (strain MoPn / Nigg).